We begin with the raw amino-acid sequence, 241 residues long: Uridylate kinase (241 aa).

15 to 18 (KLSG) provides a ligand contact to ATP. The segment at 23 to 28 (GAEGFG) is involved in allosteric activation by GTP. G57 serves as a coordination point for UMP. ATP is bound by residues G58 and R62. Residues D77 and 138 to 145 (TGNPFFTT) each bind UMP. Residues T165, F171, and D174 each contribute to the ATP site.

The protein belongs to the UMP kinase family. In terms of assembly, homohexamer.

The protein resides in the cytoplasm. It carries out the reaction UMP + ATP = UDP + ADP. The protein operates within pyrimidine metabolism; CTP biosynthesis via de novo pathway; UDP from UMP (UMPK route): step 1/1. Its activity is regulated as follows. Allosterically activated by GTP. Inhibited by UTP. Its function is as follows. Catalyzes the reversible phosphorylation of UMP to UDP. This chain is Uridylate kinase, found in Sodalis glossinidius (strain morsitans).